A 453-amino-acid chain; its full sequence is MTENEQLFWNRVLELSRSQIAPAAYEFFVLEARLLKIEHQTAVITLDNIEMKKLFWEQNLGPVILTAGFEIFNAEITANYVSNDLHLQETSFSNYQQSSNEVNTLPIRKIDSNLKEKYTFANFVQGDENRWAVSASIAVADSPGTTYNPLFIWGGPGLGKTHLLNAIGNQVLRDNPNARVLYITAENFINEFVSHIRLDSMEELKEKFRNLDLLLIDDIQSLAKKTLGGTQEEFFNTFNALHTNDKQIVLTSDRNPNQLNDLEERLVTRFSWGLPVNITPPDFETRVAILTNKIQEYPYDFPQDTIEYLAGEFDSNVRELEGALKNISLVADFKHAKTITVDIAAEAIRARKNDGPIVTVIPIEEIQIQVGKFYGVTVKEIKATKRTQDIVLARQVAMYLAREMTDNSLPKIGKEFGGRDHSTVLHAYNKIKNMVAQDDNLRIEIETIKNKIR.

Positions methionine 1–alanine 78 are domain I, interacts with DnaA modulators. Residues alanine 78–serine 112 are domain II. Positions asparagine 113–alanine 331 are domain III, AAA+ region. The ATP site is built by glycine 157, glycine 159, lysine 160, and threonine 161. Positions aspartate 332 to arginine 453 are domain IV, binds dsDNA.

Belongs to the DnaA family. As to quaternary structure, oligomerizes as a right-handed, spiral filament on DNA at oriC.

Its subcellular location is the cytoplasm. Plays an essential role in the initiation and regulation of chromosomal replication. ATP-DnaA binds to the origin of replication (oriC) to initiate formation of the DNA replication initiation complex once per cell cycle. Binds the DnaA box (a 9 base pair repeat at the origin) and separates the double-stranded (ds)DNA. Forms a right-handed helical filament on oriC DNA; dsDNA binds to the exterior of the filament while single-stranded (ss)DNA is stabiized in the filament's interior. The ATP-DnaA-oriC complex binds and stabilizes one strand of the AT-rich DNA unwinding element (DUE), permitting loading of DNA polymerase. After initiation quickly degrades to an ADP-DnaA complex that is not apt for DNA replication. Binds acidic phospholipids. This is Chromosomal replication initiator protein DnaA from Streptococcus agalactiae serotype Ia (strain ATCC 27591 / A909 / CDC SS700).